A 329-amino-acid polypeptide reads, in one-letter code: DNA-directed RNA polymerase subunit alpha (329 aa).

An alpha N-terminal domain (alpha-NTD) region spans residues 1–235 (MVREKVKVST…DLFIPFLHTE (235 aa)). Residues 269–329 (IALKYIFIDQ…KQILGILEKK (61 aa)) form an alpha C-terminal domain (alpha-CTD) region.

Belongs to the RNA polymerase alpha chain family. As to quaternary structure, in plastids the minimal PEP RNA polymerase catalytic core is composed of four subunits: alpha, beta, beta', and beta''. When a (nuclear-encoded) sigma factor is associated with the core the holoenzyme is formed, which can initiate transcription.

It localises to the plastid. The protein localises to the chloroplast. The enzyme catalyses RNA(n) + a ribonucleoside 5'-triphosphate = RNA(n+1) + diphosphate. DNA-dependent RNA polymerase catalyzes the transcription of DNA into RNA using the four ribonucleoside triphosphates as substrates. The protein is DNA-directed RNA polymerase subunit alpha of Gossypium hirsutum (Upland cotton).